The chain runs to 541 residues: Glucose-6-phosphate isomerase (541 aa).

Glu-346 acts as the Proton donor in catalysis. Active-site residues include His-377 and Lys-506.

Belongs to the GPI family.

It is found in the cytoplasm. It catalyses the reaction alpha-D-glucose 6-phosphate = beta-D-fructose 6-phosphate. It functions in the pathway carbohydrate biosynthesis; gluconeogenesis. Its pathway is carbohydrate degradation; glycolysis; D-glyceraldehyde 3-phosphate and glycerone phosphate from D-glucose: step 2/4. In terms of biological role, catalyzes the reversible isomerization of glucose-6-phosphate to fructose-6-phosphate. This Rhizobium leguminosarum bv. trifolii (strain WSM2304) protein is Glucose-6-phosphate isomerase.